The following is a 634-amino-acid chain: MSYVASNIQVLKGLEAVRKRPGMYIGSVSINGLHHLVYEVVDNSIDEALAGFCDKIEVVINSDNSVTVNDNGRGIPTDVHEEEGISALELVLTKLHSGGKFNKGTYKVSGGLHGVGISVVNALSSFLAVIVSRDGKLFKQTYSRGIPTSEVDIIGVSSARGTKVTFLADSEIFETLEYDFETLSKRLRELAFLNDKIRISIEDRRSGKEKFLEFYFEGGIKAFVDYITNNSKNIQNEPYFIEGSCDDVIVSVGLKWTEGYSDHILSFVNNINTREGGTHVAGFKSGFLKAMSEAFRDSKISKKDVPSLTLDDFKEGLTAVISIKIPEPQFEGQTKGKLGNSYVKKIVETIVHDGLLKVIDDNLLEVDIILNKAIRAARAREAARKARESERKKSAFESLALPGKLADCASKNPAEREIYIVEGDSAGGSAKMGRDRFSQAILPLWGKMLNVEKTREDKVITNDKLIPIIASLGAGVGKTFYIEKLRYHKIIIMADADVDGSHIRTLLLTFFFRYMRELIENGHVYIAMPPLYKLKYENREHYFYDDLEKEAFLGSIETGKRDKVSLQRYKGLGEMNPTQLWETTMNPATRKMKLIKINDAIQAEKIFVTLMGDDVEPRREFIEQNALDVVNLDV.

The 115-residue stretch at Arg416–Pro530 folds into the Toprim domain. 3 residues coordinate Mg(2+): Glu422, Asp495, and Asp497.

The protein belongs to the type II topoisomerase GyrB family. Heterotetramer, composed of two GyrA and two GyrB chains. In the heterotetramer, GyrA contains the active site tyrosine that forms a transient covalent intermediate with DNA, while GyrB binds cofactors and catalyzes ATP hydrolysis. It depends on Mg(2+) as a cofactor. Mn(2+) is required as a cofactor. Requires Ca(2+) as cofactor.

Its subcellular location is the cytoplasm. It catalyses the reaction ATP-dependent breakage, passage and rejoining of double-stranded DNA.. A type II topoisomerase that negatively supercoils closed circular double-stranded (ds) DNA in an ATP-dependent manner to modulate DNA topology and maintain chromosomes in an underwound state. Negative supercoiling favors strand separation, and DNA replication, transcription, recombination and repair, all of which involve strand separation. Also able to catalyze the interconversion of other topological isomers of dsDNA rings, including catenanes and knotted rings. Type II topoisomerases break and join 2 DNA strands simultaneously in an ATP-dependent manner. The chain is DNA gyrase subunit B from Borrelia hermsii.